The sequence spans 190 residues: Elongation factor P-like protein (190 aa).

This sequence belongs to the elongation factor P family.

The protein is Elongation factor P-like protein of Pseudoalteromonas translucida (strain TAC 125).